The following is a 302-amino-acid chain: 4-hydroxy-tetrahydrodipicolinate synthase (302 aa).

Pyruvate is bound at residue Thr-55. Residue Tyr-144 is the Proton donor/acceptor of the active site. The active-site Schiff-base intermediate with substrate is Lys-172. Val-214 lines the pyruvate pocket.

This sequence belongs to the DapA family. Homotetramer; dimer of dimers.

Its subcellular location is the cytoplasm. The catalysed reaction is L-aspartate 4-semialdehyde + pyruvate = (2S,4S)-4-hydroxy-2,3,4,5-tetrahydrodipicolinate + H2O + H(+). It participates in amino-acid biosynthesis; L-lysine biosynthesis via DAP pathway; (S)-tetrahydrodipicolinate from L-aspartate: step 3/4. Its function is as follows. Catalyzes the condensation of (S)-aspartate-beta-semialdehyde [(S)-ASA] and pyruvate to 4-hydroxy-tetrahydrodipicolinate (HTPA). The chain is 4-hydroxy-tetrahydrodipicolinate synthase from Synechococcus sp. (strain WH7803).